A 57-amino-acid polypeptide reads, in one-letter code: LECYQKSKVVTCQPEQKFCYSDTMTFFPNHPVYLSGCTFCRTDESGERCCTTDRCNK.

Disulfide bonds link C3–C19, C12–C37, C40–C49, and C50–C55.

It belongs to the three-finger toxin family. Short-chain subfamily. Orphan group XX sub-subfamily. As to expression, expressed by the venom gland.

The protein localises to the secreted. The sequence is that of Weak toxin CM-1b from Hemachatus haemachatus (Rinkhals).